The following is a 267-amino-acid chain: 2-keto-3-deoxy-L-rhamnonate aldolase (267 aa).

Residue H49 is the Proton acceptor of the active site. A substrate-binding site is contributed by Q151. Residue E153 participates in Mg(2+) binding. Substrate is bound by residues A178 and D179. D179 contacts Mg(2+).

The protein belongs to the HpcH/HpaI aldolase family. KDR aldolase subfamily. In terms of assembly, homohexamer. Mg(2+) serves as cofactor.

The catalysed reaction is 2-dehydro-3-deoxy-L-rhamnonate = (S)-lactaldehyde + pyruvate. Catalyzes the reversible retro-aldol cleavage of 2-keto-3-deoxy-L-rhamnonate (KDR) to pyruvate and lactaldehyde. In Salmonella dublin (strain CT_02021853), this protein is 2-keto-3-deoxy-L-rhamnonate aldolase.